We begin with the raw amino-acid sequence, 156 residues long: MNLNATLIGQLIAFALFVAFCMKFVWPPLIKAIEERQANIANALASAEKAKQEQADSKAAADQEILKAKEEAQKIIDLATKRRNEILETVQAEAEIERQRIIEQGHAEVESERKRVQEELRQKVAALAVAGAEKIVGCSVDQAANNDIIDKLVAEL.

The chain crosses the membrane as a helical span at residues 7-27; the sequence is LIGQLIAFALFVAFCMKFVWP.

The protein belongs to the ATPase B chain family. In terms of assembly, F-type ATPases have 2 components, F(1) - the catalytic core - and F(0) - the membrane proton channel. F(1) has five subunits: alpha(3), beta(3), gamma(1), delta(1), epsilon(1). F(0) has three main subunits: a(1), b(2) and c(10-14). The alpha and beta chains form an alternating ring which encloses part of the gamma chain. F(1) is attached to F(0) by a central stalk formed by the gamma and epsilon chains, while a peripheral stalk is formed by the delta and b chains.

Its subcellular location is the cell inner membrane. In terms of biological role, f(1)F(0) ATP synthase produces ATP from ADP in the presence of a proton or sodium gradient. F-type ATPases consist of two structural domains, F(1) containing the extramembraneous catalytic core and F(0) containing the membrane proton channel, linked together by a central stalk and a peripheral stalk. During catalysis, ATP synthesis in the catalytic domain of F(1) is coupled via a rotary mechanism of the central stalk subunits to proton translocation. Component of the F(0) channel, it forms part of the peripheral stalk, linking F(1) to F(0). This Actinobacillus pleuropneumoniae serotype 5b (strain L20) protein is ATP synthase subunit b.